Reading from the N-terminus, the 288-residue chain is Cell division protein ZipA (288 aa).

A topological domain (periplasmic) is located at residue M1. Residues E2 to F22 traverse the membrane as a helical segment. The Cytoplasmic portion of the chain corresponds to D23 to G288. Residues D48 to E138 form a disordered region. Composition is skewed to basic and acidic residues over residues L64–L77, R85–P105, and A122–E138.

The protein belongs to the ZipA family. As to quaternary structure, interacts with FtsZ via their C-terminal domains.

It is found in the cell inner membrane. Essential cell division protein that stabilizes the FtsZ protofilaments by cross-linking them and that serves as a cytoplasmic membrane anchor for the Z ring. Also required for the recruitment to the septal ring of downstream cell division proteins. The polypeptide is Cell division protein ZipA (Pseudomonas syringae pv. tomato (strain ATCC BAA-871 / DC3000)).